A 258-amino-acid chain; its full sequence is Trans-aconitate 2-methyltransferase (258 aa).

Belongs to the methyltransferase superfamily. Tam family.

It is found in the cytoplasm. The enzyme catalyses trans-aconitate + S-adenosyl-L-methionine = (E)-3-(methoxycarbonyl)pent-2-enedioate + S-adenosyl-L-homocysteine. Functionally, catalyzes the S-adenosylmethionine monomethyl esterification of trans-aconitate. In Acidovorax ebreus (strain TPSY) (Diaphorobacter sp. (strain TPSY)), this protein is Trans-aconitate 2-methyltransferase.